Reading from the N-terminus, the 210-residue chain is Dephospho-CoA kinase (210 aa).

The DPCK domain maps to 4–202 (WVGLTGGIGS…AFYSGIFASK (199 aa)). Residue 12-17 (GSGKSA) participates in ATP binding.

It belongs to the CoaE family.

It localises to the cytoplasm. It carries out the reaction 3'-dephospho-CoA + ATP = ADP + CoA + H(+). It participates in cofactor biosynthesis; coenzyme A biosynthesis; CoA from (R)-pantothenate: step 5/5. In terms of biological role, catalyzes the phosphorylation of the 3'-hydroxyl group of dephosphocoenzyme A to form coenzyme A. In Neisseria gonorrhoeae, this protein is Dephospho-CoA kinase.